The chain runs to 634 residues: tRNA uridine 5-carboxymethylaminomethyl modification enzyme MnmG (634 aa).

14–19 (GGGHAG) contributes to the FAD binding site. Residue 279-293 (GPRYCPSIEDKVVRF) coordinates NAD(+).

It belongs to the MnmG family. As to quaternary structure, homodimer. Heterotetramer of two MnmE and two MnmG subunits. Requires FAD as cofactor.

Its subcellular location is the cytoplasm. Its function is as follows. NAD-binding protein involved in the addition of a carboxymethylaminomethyl (cmnm) group at the wobble position (U34) of certain tRNAs, forming tRNA-cmnm(5)s(2)U34. This chain is tRNA uridine 5-carboxymethylaminomethyl modification enzyme MnmG, found in Xanthomonas euvesicatoria pv. vesicatoria (strain 85-10) (Xanthomonas campestris pv. vesicatoria).